The following is a 338-amino-acid chain: Aspartate carbamoyltransferase catalytic subunit (338 aa).

Carbamoyl phosphate-binding residues include R72 and T73. K100 contacts L-aspartate. Residues R122, H152, and Q155 each coordinate carbamoyl phosphate. L-aspartate-binding residues include R186 and R243. Carbamoyl phosphate-binding residues include G284 and P285.

This sequence belongs to the aspartate/ornithine carbamoyltransferase superfamily. ATCase family. In terms of assembly, heterododecamer (2C3:3R2) of six catalytic PyrB chains organized as two trimers (C3), and six regulatory PyrI chains organized as three dimers (R2).

It carries out the reaction carbamoyl phosphate + L-aspartate = N-carbamoyl-L-aspartate + phosphate + H(+). It participates in pyrimidine metabolism; UMP biosynthesis via de novo pathway; (S)-dihydroorotate from bicarbonate: step 2/3. Its function is as follows. Catalyzes the condensation of carbamoyl phosphate and aspartate to form carbamoyl aspartate and inorganic phosphate, the committed step in the de novo pyrimidine nucleotide biosynthesis pathway. In Acinetobacter baumannii (strain SDF), this protein is Aspartate carbamoyltransferase catalytic subunit.